The sequence spans 216 residues: PEP-dependent dihydroxyacetone kinase 2, ADP-binding subunit DhaL (216 aa).

Residues 9–210 (AFFGHVLQDM…SWMLMNVILE (202 aa)) enclose the DhaL domain. Aspartate 33, aspartate 38, and aspartate 40 together coordinate Mg(2+). ADP-binding positions include 41–44 (HGIN), 84–85 (AS), glycine 126, methionine 135, arginine 182, and 195–197 (DPG).

In terms of assembly, homodimer. The dihydroxyacetone kinase complex is composed of a homodimer of DhaM, a homodimer of DhaK and the subunit DhaL. It depends on Mg(2+) as a cofactor.

The protein resides in the cytoplasm. It carries out the reaction dihydroxyacetone + phosphoenolpyruvate = dihydroxyacetone phosphate + pyruvate. It participates in polyol metabolism; glycerol degradation. Its function is as follows. ADP-binding subunit of the dihydroxyacetone kinase, which is responsible for the phosphoenolpyruvate (PEP)-dependent phosphorylation of dihydroxyacetone. DhaL-ADP is converted to DhaL-ATP via a phosphoryl group transfer from DhaM and transmits it to dihydroxyacetone binds to DhaK. The chain is PEP-dependent dihydroxyacetone kinase 2, ADP-binding subunit DhaL from Listeria innocua serovar 6a (strain ATCC BAA-680 / CLIP 11262).